Reading from the N-terminus, the 329-residue chain is Type 2 lactosamine alpha-2,3-sialyltransferase (329 aa).

Residues 1–4 are Cytoplasmic-facing; the sequence is MKGY. Residues 5–25 form a helical; Signal-anchor for type II membrane protein membrane-spanning segment; the sequence is LVAIFLSSIFLYYVLYCILWG. The Lumenal segment spans residues 26 to 329; that stretch reads TNGYWFPAEE…IKKKMVINLT (304 aa). N-linked (GlcNAc...) asparagine glycans are attached at residues N129, N181, N295, and N308.

This sequence belongs to the glycosyltransferase 29 family.

It is found in the golgi apparatus membrane. It catalyses the reaction a neolactoside nLc4Cer(d18:1(4E)) + CMP-N-acetyl-beta-neuraminate = a neolactoside IV(3)-alpha-NeuAc-nLc4Cer(d18:1(4E)) + CMP + H(+). The enzyme catalyses a beta-D-galactosyl-(1-&gt;4)-N-acetyl-beta-D-glucosaminyl derivative + CMP-N-acetyl-beta-neuraminate = an N-acetyl-alpha-neuraminyl-(2-&gt;3)-beta-D-galactosyl-(1-&gt;4)-N-acetyl-beta-D-glucosaminyl derivative + CMP + H(+). The catalysed reaction is a neolactoside nLc6Cer(d18:1(4E)) + CMP-N-acetyl-beta-neuraminate = a neolactoside VI(3)-alpha-NeuNAc-nLc6Cer(d18:1(4E)) + CMP + H(+). Transfers the sialyl residue from CMP-N-acetyl-beta-neuraminate to the terminal galactose residue on sugar chains of glycoproteins and glycolipids. It's alpha-2,3-sialyltransferase activity is specific toward type II glycan chains (Galbeta1-4GlcNAc) on glycoproteins and glycolipids such as neolactosides nLc4Cer and nLc6Cer, whose sialyl-products serve as precursors for the Lewis X antigen. Critically involved in the synthesis of functional selectin ligands needed for neutrophil recruitment during inflammation and lymphocyte homing to the lymph nodes. The chain is Type 2 lactosamine alpha-2,3-sialyltransferase (St3gal6) from Mus musculus (Mouse).